We begin with the raw amino-acid sequence, 543 residues long: Ribonuclease Y (543 aa).

Residues isoleucine 4–tyrosine 24 form a helical membrane-spanning segment. Positions threonine 233–leucine 296 constitute a KH domain. The HD domain maps to valine 359–alanine 452.

It belongs to the RNase Y family.

It localises to the cell membrane. Endoribonuclease that initiates mRNA decay. This chain is Ribonuclease Y, found in Lactobacillus acidophilus (strain ATCC 700396 / NCK56 / N2 / NCFM).